Reading from the N-terminus, the 393-residue chain is MALKVATVAGSAAKAVLGPALLCRPWEVLGAHEVPSRNIFSEQTIPPSAKYGGRHTVTMIPGDGIGPELMLHVKSVFRHACVPVDFEEVHVSSNADEEDIRNAIMAIRRNRVALKGNIETNHNLPPSHKSRNNILRTSLDLYANVIHCKSLPGVVTRHKDIDILIVRENTEGEYSSLEHESVAGVVESLKIITKAKSLRIAEYAFKLAQESGRKKVTAVHKANIMKLGDGLFLQCCREVAARYPQITFENMIVDNTTMQLVSRPQQFDVMVMPNLYGNIVNNVCAGLVGGPGLVAGANYGHVYAVFETATRNTGKSIANKNIANPTATLLASCMMLDHLKLHSYATSIRKAVLASMDNENMHTPDIGGQGTTSEAIQDVIRHIRVINGRAVEA.

The N-terminal 39 residues, 1-39 (MALKVATVAGSAAKAVLGPALLCRPWEVLGAHEVPSRNI), are a transit peptide targeting the mitochondrion. Residues threonine 120 and asparagine 133 each contribute to the citrate site. Residues arginine 136, arginine 167, and aspartate 254 each coordinate substrate. Mn(2+) is bound at residue aspartate 254. Positions 312, 313, and 324 each coordinate ADP.

The protein belongs to the isocitrate and isopropylmalate dehydrogenases family. As to quaternary structure, heterooligomer of subunits alpha (IDH3A), beta (IDH3B), and gamma (IDH3G) in the apparent ratio of 2:1:1. The heterodimer containing one IDH3A and one IDH3B subunit and the heterodimer containing one IDH3A and one IDH3G subunit assemble into a heterotetramer (which contains two subunits of IDH3A, one of IDH3B and one of IDH3G) and further into the heterooctamer. It depends on Mg(2+) as a cofactor. The cofactor is Mn(2+).

The protein resides in the mitochondrion. The heterotetramer and the heterodimer composed of IDH3A and IDH3G subunits can be allosterically activated by citrate (CIT) or/and ADP, and the two activators can act independently or synergistically. The heterodimer composed of IDH3A and IDH3B subunits cannot be allosterically regulated and the allosteric regulation of the heterotetramer is through the IDH3G subunit and not the IDH3B subunit. The IDH3G subunit contains the allosteric site which consists of a CIT-binding site and an ADP-binding site, and the binding of CIT and ADP causes conformational changes at the allosteric site which are transmitted to the active site in the catalytic subunit (IDH3A) through a cascade of conformational changes at the heterodimer interface, leading to stabilization of the isocitrate-binding at the active site and thus activation of the enzyme. ATP can activate the heterotetramer and the heterodimer composed of IDH3A and IDH3G subunits at low concentrations but inhibits their activities at high concentrations, whereas ATP exhibits only inhibitory effect on the heterodimer composed of IDH3A and IDH3B subunits. Regulatory subunit which plays a role in the allosteric regulation of the enzyme catalyzing the decarboxylation of isocitrate (ICT) into alpha-ketoglutarate. The heterodimer composed of the alpha (IDH3A) and beta (IDH3B) subunits and the heterodimer composed of the alpha (IDH3A) and gamma (IDH3G) subunits, have considerable basal activity but the full activity of the heterotetramer (containing two subunits of IDH3A, one of IDH3B and one of IDH3G) requires the assembly and cooperative function of both heterodimers. This is Isocitrate dehydrogenase [NAD] subunit gamma, mitochondrial (IDH3G) from Homo sapiens (Human).